The following is an 825-amino-acid chain: Breast cancer anti-estrogen resistance protein 3 homolog (825 aa).

The residue at position 2 (Ala-2) is an N-acetylalanine. Positions 31–93 (KSPLTEHRPD…PVTQDSIQES (63 aa)) are disordered. A phosphoserine mark is found at Ser-32, Ser-78, Ser-83, Ser-182, and Ser-290. A compositionally biased stretch (polar residues) spans 75 to 93 (HSKSPQQNSPVTQDSIQES). The SH2 domain maps to 154-253 (WYHGRIPRQV…QSGAIIFQPI (100 aa)). N6-methyllysine is present on Lys-334. Ser-358, Ser-363, and Ser-375 each carry phosphoserine. At Arg-442 the chain carries Omega-N-methylarginine. At Ser-471 the chain carries Phosphoserine. In terms of domain architecture, Ras-GEF spans 548–818 (DPKVIAQHIL…TALSRKLEPP (271 aa)). The tract at residues 744–748 (LATAR) is mediates the interaction with BCAR1/p130CAS.

As to quaternary structure, part of a complex comprised of PTPRA, BCAR1, BCAR3 (via SH2 domain) and SRC; the formation of the complex is dependent on integrin mediated-tyrosine phosphorylation of PTPRA. Within the complex, interacts (via SH2 domain) with PTPRA (when phosphorylated on 'Tyr-798'). Interacts (via Ras-GEF domain) with BCAR1. Interacts (via Ras-GEF domain) with NEDD9. Interacts with PTK2/FAK1. Interacts with PTPN1. Interacts (via SH2 domain) with EGFR (when tyrosine-phosphorylated). In terms of processing, phosphorylated on tyrosine residues.

It localises to the cytoplasm. It is found in the cell junction. Its subcellular location is the focal adhesion. Acts as an adapter protein downstream of several growth factor receptors to promote cell proliferation, migration, and redistribution of actin fibers. Specifically involved in INS/insulin signaling pathway by mediating MAPK1/ERK2-MAPK3/ERK1 activation and DNA synthesis. Promotes insulin-mediated membrane ruffling. In response to vasoconstrictor peptide EDN1, involved in the activation of RAP1 downstream of PTK2B via interaction with phosphorylated BCAR1. Inhibits cell migration and invasion via regulation of TGFB-mediated matrix digestion, actin filament rearrangement, and inhibition of invadopodia activity. May inhibit TGFB-SMAD signaling, via facilitating BCAR1 and SMAD2 and/or SMAD3 interaction. Regulates EGF-induced DNA synthesis. Required for the maintenance of ocular lens morphology and structural integrity, potentially via regulation of focal adhesion complex signaling. Acts upstream of PTPRA to regulate the localization of BCAR1 and PTPRA to focal adhesions, via regulation of SRC-mediated phosphorylation of PTPRA. Positively regulates integrin-induced tyrosine phosphorylation of BCAR1. Acts as a guanine nucleotide exchange factor (GEF) for small GTPases RALA, RAP1A and RRAS. However, in a contrasting study, lacks GEF activity towards RAP1. The protein is Breast cancer anti-estrogen resistance protein 3 homolog (BCAR3) of Macaca fascicularis (Crab-eating macaque).